A 60-amino-acid chain; its full sequence is Large ribosomal subunit protein bL32 (60 aa).

It belongs to the bacterial ribosomal protein bL32 family.

The protein is Large ribosomal subunit protein bL32 of Desulfovibrio desulfuricans (strain ATCC 27774 / DSM 6949 / MB).